An 836-amino-acid chain; its full sequence is Homeobox-leucine zipper protein ATHB-15 (836 aa).

Residues 14-77 (DNGKYVRYTP…NRRCREKQRK (64 aa)) constitute a DNA-binding region (homeobox). Residues 72–115 (REKQRKEASRLQAVNRKLTAMNKLLMEENDRLQKQVSQLVHENS) adopt a coiled-coil conformation. The region spanning 151 to 379 (RDASPAGLLS…IAQEVTQTNS (229 aa)) is the START domain.

It belongs to the HD-ZIP homeobox family. Class III subfamily. In terms of assembly, interacts with ESR1 and ESR2. Interacts with ZPR3. In terms of tissue distribution, highly expressed the developing vascular elements and the adaxial portion of cotyledons. Expressed in developing ovules, stamens and carpels. Expressed in procambium and shoot meristem.

Its subcellular location is the nucleus. In terms of biological role, probable transcription factor involved in the regulation of meristem development to promote lateral organ formation. May regulates procambial and vascular tissue formation or maintenance, and vascular development in inflorescence stems. This is Homeobox-leucine zipper protein ATHB-15 (ATHB-15) from Arabidopsis thaliana (Mouse-ear cress).